The sequence spans 404 residues: Propionate kinase (404 aa).

It belongs to the acetokinase family. PduW subfamily.

The protein resides in the cytoplasm. It catalyses the reaction propanoate + ATP = propanoyl phosphate + ADP. Its pathway is polyol metabolism; 1,2-propanediol degradation. In terms of biological role, works with phosphate acetyltransferase (pta) to capture exogenous propionate and regenerate propionyl-CoA during degradation of 1,2-propanediol (1,2-PD). The sequence is that of Propionate kinase from Klebsiella pneumoniae subsp. pneumoniae (strain ATCC 700721 / MGH 78578).